Consider the following 61-residue polypeptide: Small ribosomal subunit protein uS14 (61 aa).

4 residues coordinate Zn(2+): Cys-24, Cys-27, Cys-40, and Cys-43.

It belongs to the universal ribosomal protein uS14 family. Zinc-binding uS14 subfamily. Part of the 30S ribosomal subunit. Contacts proteins S3 and S10. Zn(2+) is required as a cofactor.

Functionally, binds 16S rRNA, required for the assembly of 30S particles and may also be responsible for determining the conformation of the 16S rRNA at the A site. The sequence is that of Small ribosomal subunit protein uS14 from Mesomycoplasma hyopneumoniae (strain 232) (Mycoplasma hyopneumoniae).